The primary structure comprises 303 residues: MGQCVTKCKNPSSTLGSKNGERESSKPHKRSSSHKEEHMSICGKASGEILVNGTKKGDASLEASQPLAVGVDTKKKEQGVGAELSSLQRIEELFRRYKDEREDAILEEGMERFCDDLCVDPTEFRVLVLAWKFQAATMCKFTRREFFEGCKSINADGIESICSQFPGLLNEAKQEDKFKDLYRFTFQFGLDSEEGQRSLHREIAIALWKLVFTQNKPLILDQWLEFLTENPSGIKGISRDTWNMFLNFTQVIGPDLSNYSEDEAWPSLFDTFVEWEMERRKSEEKTDCIPCLGTDHQSRDEQT.

Positions 1 to 40 (MGQCVTKCKNPSSTLGSKNGERESSKPHKRSSSHKEEHMS) are disordered. Gly-2 is lipidated: N-myristoyl glycine. The 193-residue stretch at 85–277 (SSLQRIEELF…LFDTFVEWEM (193 aa)) folds into the DCUN1 domain.

In terms of assembly, may interact (via the DCUN1 domain) with unneddylated cullins.

It localises to the cell membrane. The protein localises to the cytoplasm. Its subcellular location is the nucleus. The protein resides in the perinuclear region. Its function is as follows. Contributes to the neddylation of all cullins by transferring NEDD8 from N-terminally acetylated NEDD8-conjugating E2s enzyme to different cullin C-terminal domain-RBX complexes. At the cell membrane, can promote and as well inhibit cullins neddylation. This chain is DCN1-like protein 3, found in Xenopus laevis (African clawed frog).